The following is a 314-amino-acid chain: Methionyl-tRNA formyltransferase (314 aa).

110-113 (SLLP) contributes to the (6S)-5,6,7,8-tetrahydrofolate binding site.

Belongs to the Fmt family.

The catalysed reaction is L-methionyl-tRNA(fMet) + (6R)-10-formyltetrahydrofolate = N-formyl-L-methionyl-tRNA(fMet) + (6S)-5,6,7,8-tetrahydrofolate + H(+). Its function is as follows. Attaches a formyl group to the free amino group of methionyl-tRNA(fMet). The formyl group appears to play a dual role in the initiator identity of N-formylmethionyl-tRNA by promoting its recognition by IF2 and preventing the misappropriation of this tRNA by the elongation apparatus. In Bacillus mycoides (strain KBAB4) (Bacillus weihenstephanensis), this protein is Methionyl-tRNA formyltransferase.